A 362-amino-acid polypeptide reads, in one-letter code: Atypical chemokine receptor 3 (362 aa).

Residues 1-47 (MDVHLFDYAEPGNYSDINWPCNSSDCIVVDTVQCPTMPNKNVLLYTL) are Extracellular-facing. N-linked (GlcNAc...) asparagine glycosylation is found at asparagine 13 and asparagine 22. Residues 48-68 (SFIYIFIFVIGMIANSVVVWV) form a helical membrane-spanning segment. Residues 69-81 (NIQAKTTGYDTHC) lie on the Cytoplasmic side of the membrane. Residues 82-102 (YILNLAIADLWVVITIPVWVV) traverse the membrane as a helical segment. The Extracellular segment spans residues 103-118 (SLVQHNQWPMGELTCK). Cysteine 117 and cysteine 196 are oxidised to a cystine. The chain crosses the membrane as a helical span at residues 119 to 139 (ITHLIFSINLFGSIFFLACMS). Topologically, residues 140-162 (VDRYLSITYFTGTSSYKKKMVRR) are cytoplasmic. The chain crosses the membrane as a helical span at residues 163–183 (VVCILVWLLAFFVSLPDTYYL). At 184 to 213 (KTVTSASNNETYCRSFYPEHSIKEWLIGME) the chain is on the extracellular side. A helical transmembrane segment spans residues 214–234 (LVSVILGFAVPFTIIAIFYFL). Over 235–252 (LARAMSASGDQEKHSSRK) the chain is Cytoplasmic. A helical transmembrane segment spans residues 253–273 (IIFSYVVVFLVCWLPYHFVVL). At 274 to 296 (LDIFSILHYIPFTCQLENVLFTA) the chain is on the extracellular side. The helical transmembrane segment at 297–319 (LHVTQCLSLVHCCVNPVLYSFIN) threads the bilayer. The Cytoplasmic segment spans residues 320 to 362 (RNYRYELMKAFIFKYSAKTGLTKLIDASRVSETEYSALEQNTK). Residues 324-362 (YELMKAFIFKYSAKTGLTKLIDASRVSETEYSALEQNTK) form a C-terminal cytoplasmic tail region. Phosphoserine occurs at positions 347, 350, and 355.

The protein belongs to the G-protein coupled receptor 1 family. Atypical chemokine receptor subfamily. As to quaternary structure, homodimer. Can form heterodimers with CXCR4; heterodimerization may regulate CXCR4 signaling activity. Interacts with ARRB1 and ARRB2. Post-translationally, the Ser/Thr residues in the C-terminal cytoplasmic tail may be phosphorylated. In terms of processing, ubiquitinated at the Lys residues in its C-terminal cytoplasmic tail and is essential for correct trafficking from and to the cell membrane. Deubiquitinated by CXCL12-stimulation in a reversible manner. Not detected in blood, liver, lung and heart, but high expression detected in several tumor cell lines (at protein level). Expressed in heart, spleen, kidney, lung, ovary, brain, testis, astrocytes, neutrophils and B-lymphocytes.

It is found in the cell membrane. The protein localises to the early endosome. Its subcellular location is the recycling endosome. Its function is as follows. Atypical chemokine receptor that controls chemokine levels and localization via high-affinity chemokine binding that is uncoupled from classic ligand-driven signal transduction cascades, resulting instead in chemokine sequestration, degradation, or transcytosis. Also known as interceptor (internalizing receptor) or chemokine-scavenging receptor or chemokine decoy receptor. Acts as a receptor for chemokines CXCL11 and CXCL12/SDF1. Chemokine binding does not activate G-protein-mediated signal transduction but instead induces beta-arrestin recruitment, leading to ligand internalization and activation of MAPK signaling pathway. Required for regulation of CXCR4 protein levels in migrating interneurons, thereby adapting their chemokine responsiveness. In glioma cells, transduces signals via MEK/ERK pathway, mediating resistance to apoptosis. Promotes cell growth and survival. Not involved in cell migration, adhesion or proliferation of normal hematopoietic progenitors but activated by CXCL11 in malignant hemapoietic cells, leading to phosphorylation of ERK1/2 (MAPK3/MAPK1) and enhanced cell adhesion and migration. Plays a regulatory role in CXCR4-mediated activation of cell surface integrins by CXCL12. Required for heart valve development. Regulates axon guidance in the oculomotor system through the regulation of CXCL12 levels. This is Atypical chemokine receptor 3 from Mus musculus (Mouse).